The sequence spans 335 residues: DNA-directed RNA polymerase subunit alpha (335 aa).

The tract at residues methionine 1 to glutamine 233 is alpha N-terminal domain (alpha-NTD). The tract at residues valine 247–arginine 335 is alpha C-terminal domain (alpha-CTD).

This sequence belongs to the RNA polymerase alpha chain family. Homodimer. The RNAP catalytic core consists of 2 alpha, 1 beta, 1 beta' and 1 omega subunit. When a sigma factor is associated with the core the holoenzyme is formed, which can initiate transcription.

It catalyses the reaction RNA(n) + a ribonucleoside 5'-triphosphate = RNA(n+1) + diphosphate. DNA-dependent RNA polymerase catalyzes the transcription of DNA into RNA using the four ribonucleoside triphosphates as substrates. The protein is DNA-directed RNA polymerase subunit alpha of Acinetobacter baumannii (strain AB307-0294).